The chain runs to 384 residues: Nodal homolog 2-B (384 aa).

Positions 1-18 (MASLGAILLFAIASLMHG) are cleaved as a signal peptide. The propeptide occupies 19–283 (RPIHSDRKGA…RVADARRHRR (265 aa)). Residues asparagine 71, asparagine 173, and asparagine 344 are each glycosylated (N-linked (GlcNAc...) asparagine). The cysteines at positions 306 and 372 are disulfide-linked.

This sequence belongs to the TGF-beta family. Homodimer; disulfide-linked. Forms heterodimers with the TGF-beta family member derriere. Interacts with tsku; enhances nodal2 activity.

The protein resides in the secreted. Cooperation and regulatory loops of multiple nodals are essential for mesendoderm patterning in early embryos. Essential for mesoderm formation and axial patterning during embryonic development. Activates the activin-like signaling pathway to induce dorsal and ventral mesoderm in animal cap ectoderm. In addition, also dorsalizes ventral marginal zone (VMZ) tissues during gastrulation. Induces muscle actin. Appears to act as both a short-range and long-range morphogen. The unprocessed protein inhibits bmp- and wnt-signaling. The polypeptide is Nodal homolog 2-B (nodal2-b) (Xenopus laevis (African clawed frog)).